The chain runs to 191 residues: Orotate phosphoribosyltransferase (191 aa).

A 5-phospho-alpha-D-ribose 1-diphosphate-binding site is contributed by 116–124 (EDVVTTGGS). Orotate-binding residues include Thr-120 and Arg-148.

Belongs to the purine/pyrimidine phosphoribosyltransferase family. PyrE subfamily. As to quaternary structure, homodimer. It depends on Mg(2+) as a cofactor.

The catalysed reaction is orotidine 5'-phosphate + diphosphate = orotate + 5-phospho-alpha-D-ribose 1-diphosphate. Its pathway is pyrimidine metabolism; UMP biosynthesis via de novo pathway; UMP from orotate: step 1/2. Catalyzes the transfer of a ribosyl phosphate group from 5-phosphoribose 1-diphosphate to orotate, leading to the formation of orotidine monophosphate (OMP). This Heliobacterium modesticaldum (strain ATCC 51547 / Ice1) protein is Orotate phosphoribosyltransferase.